The sequence spans 504 residues: Probable cytochrome P450 6a21 (504 aa).

Heme is bound at residue Cys449.

Belongs to the cytochrome P450 family. Heme serves as cofactor.

It is found in the endoplasmic reticulum membrane. The protein resides in the microsome membrane. May be involved in the metabolism of insect hormones and in the breakdown of synthetic insecticides. This is Probable cytochrome P450 6a21 (Cyp6a21) from Drosophila melanogaster (Fruit fly).